Here is a 298-residue protein sequence, read N- to C-terminus: Acetate permease A (298 aa).

Residues 1-43 (MSAEQNHGLEKDVGGPAAPAAAAPNAPAAAPGAPPAGMSAEEH) form a disordered region. Low complexity predominate over residues 14–37 (GGPAAPAAAAPNAPAAAPGAPPAG). 6 helical membrane-spanning segments follow: residues 86–106 (APLG…INMG), 115–135 (IVIA…GMWE), 146–166 (ALSS…PGGF), 185–205 (SFGL…FCTL), 210–230 (AFFL…VGYI), and 245–265 (AGGF…LAGI).

The protein belongs to the acetate uptake transporter (AceTr) (TC 2.A.96) family.

The protein resides in the cell membrane. The protein localises to the vacuole membrane. Functionally, high affinity monocarboxylate transporter (MCT) involved in acetate uptake. Unlike other activities involved in acetate utilization, acpA is dispensable for growth on the acetate precursor ethanol. The protein is Acetate permease A of Emericella nidulans (strain FGSC A4 / ATCC 38163 / CBS 112.46 / NRRL 194 / M139) (Aspergillus nidulans).